The following is a 282-amino-acid chain: Pantothenate synthetase (282 aa).

Residue 30–37 (MGALHAGH) coordinates ATP. His-37 functions as the Proton donor in the catalytic mechanism. A (R)-pantoate-binding site is contributed by Gln-61. Residue Gln-61 participates in beta-alanine binding. 147–150 (GEKD) is a binding site for ATP. (R)-pantoate is bound at residue Gln-153. ATP is bound by residues Val-176 and 184–187 (LSSR).

The protein belongs to the pantothenate synthetase family. In terms of assembly, homodimer.

It is found in the cytoplasm. It carries out the reaction (R)-pantoate + beta-alanine + ATP = (R)-pantothenate + AMP + diphosphate + H(+). It participates in cofactor biosynthesis; (R)-pantothenate biosynthesis; (R)-pantothenate from (R)-pantoate and beta-alanine: step 1/1. Catalyzes the condensation of pantoate with beta-alanine in an ATP-dependent reaction via a pantoyl-adenylate intermediate. The sequence is that of Pantothenate synthetase from Bacteroides thetaiotaomicron (strain ATCC 29148 / DSM 2079 / JCM 5827 / CCUG 10774 / NCTC 10582 / VPI-5482 / E50).